We begin with the raw amino-acid sequence, 113 residues long: Large ribosomal subunit protein uL22 (113 aa).

The protein belongs to the universal ribosomal protein uL22 family. As to quaternary structure, part of the 50S ribosomal subunit.

This protein binds specifically to 23S rRNA; its binding is stimulated by other ribosomal proteins, e.g. L4, L17, and L20. It is important during the early stages of 50S assembly. It makes multiple contacts with different domains of the 23S rRNA in the assembled 50S subunit and ribosome. Functionally, the globular domain of the protein is located near the polypeptide exit tunnel on the outside of the subunit, while an extended beta-hairpin is found that lines the wall of the exit tunnel in the center of the 70S ribosome. This chain is Large ribosomal subunit protein uL22, found in Carboxydothermus hydrogenoformans (strain ATCC BAA-161 / DSM 6008 / Z-2901).